Consider the following 95-residue polypeptide: Pancreatic polypeptide prohormone (95 aa).

The signal sequence occupies residues 1 to 29; it reads MAAARLCLSLLLLSTCVALLLQPLLGAQG. At tyrosine 65 the chain carries Tyrosine amide. The propeptide occupies 89 to 95; sequence ELSPLDL.

Belongs to the NPY family.

It is found in the secreted. In terms of biological role, hormone secreted by pancreatic cells that acts as a regulator of pancreatic and gastrointestinal functions probably by signaling through the G protein-coupled receptor NPY4R2. This Homo sapiens (Human) protein is Pancreatic polypeptide prohormone.